Reading from the N-terminus, the 257-residue chain is 1-(5-phosphoribosyl)-5-[(5-phosphoribosylamino)methylideneamino] imidazole-4-carboxamide isomerase (257 aa).

Asp8 (proton acceptor) is an active-site residue. The active-site Proton donor is Asp129.

This sequence belongs to the HisA/HisF family.

The protein resides in the cytoplasm. It catalyses the reaction 1-(5-phospho-beta-D-ribosyl)-5-[(5-phospho-beta-D-ribosylamino)methylideneamino]imidazole-4-carboxamide = 5-[(5-phospho-1-deoxy-D-ribulos-1-ylimino)methylamino]-1-(5-phospho-beta-D-ribosyl)imidazole-4-carboxamide. It participates in amino-acid biosynthesis; L-histidine biosynthesis; L-histidine from 5-phospho-alpha-D-ribose 1-diphosphate: step 4/9. The protein is 1-(5-phosphoribosyl)-5-[(5-phosphoribosylamino)methylideneamino] imidazole-4-carboxamide isomerase of Cyanothece sp. (strain PCC 7425 / ATCC 29141).